Here is a 308-residue protein sequence, read N- to C-terminus: Ribonuclease HIII (308 aa).

The RNase H type-2 domain occupies 93–308; the sequence is MSVLGSDETG…ANTEKARKMI (216 aa). The a divalent metal cation site is built by Asp-99, Glu-100, and Asp-204.

This sequence belongs to the RNase HII family. RnhC subfamily. Mn(2+) serves as cofactor. It depends on Mg(2+) as a cofactor.

It is found in the cytoplasm. It carries out the reaction Endonucleolytic cleavage to 5'-phosphomonoester.. Functionally, endonuclease that specifically degrades the RNA of RNA-DNA hybrids. The chain is Ribonuclease HIII from Lysinibacillus sphaericus (strain C3-41).